The chain runs to 76 residues: Bomanin Tailed 2 (76 aa).

An N-terminal signal peptide occupies residues 1-22 (MKALQVAGTLMLLFCLLAAVNA). Residues 23-24 (TP) constitute a propeptide, removed by a dipeptidylpeptidase. A disulfide bridge links Cys33 with Cys36.

The protein belongs to the bomanin family.

It is found in the secreted. Secreted immune-induced peptide induced by Toll signaling. Has a role in resistance to bacterial and fungal infections. The strength of antimicrobial activity appears to correlate with the overall level of expression. The chain is Bomanin Tailed 2 from Drosophila melanogaster (Fruit fly).